Reading from the N-terminus, the 139-residue chain is D-ribose pyranase (139 aa).

The Proton donor role is filled by His-20. Substrate is bound by residues Asp-28, His-106, and 128-130; that span reads YAN.

This sequence belongs to the RbsD / FucU family. RbsD subfamily. In terms of assembly, homodecamer.

It is found in the cytoplasm. It carries out the reaction beta-D-ribopyranose = beta-D-ribofuranose. It participates in carbohydrate metabolism; D-ribose degradation; D-ribose 5-phosphate from beta-D-ribopyranose: step 1/2. Catalyzes the interconversion of beta-pyran and beta-furan forms of D-ribose. In Proteus mirabilis (strain HI4320), this protein is D-ribose pyranase.